The chain runs to 325 residues: ATP phosphoribosyltransferase (325 aa).

Belongs to the ATP phosphoribosyltransferase family. Long subfamily. Mg(2+) serves as cofactor.

Its subcellular location is the cytoplasm. It catalyses the reaction 1-(5-phospho-beta-D-ribosyl)-ATP + diphosphate = 5-phospho-alpha-D-ribose 1-diphosphate + ATP. Its pathway is amino-acid biosynthesis; L-histidine biosynthesis; L-histidine from 5-phospho-alpha-D-ribose 1-diphosphate: step 1/9. Its activity is regulated as follows. Feedback inhibited by histidine. Its function is as follows. Catalyzes the condensation of ATP and 5-phosphoribose 1-diphosphate to form N'-(5'-phosphoribosyl)-ATP (PR-ATP). Has a crucial role in the pathway because the rate of histidine biosynthesis seems to be controlled primarily by regulation of HisG enzymatic activity. This is ATP phosphoribosyltransferase from Rhodopseudomonas palustris (strain BisA53).